We begin with the raw amino-acid sequence, 876 residues long: GRB2-associated and regulator of MAPK protein 1 (876 aa).

A CABIT region spans residues 12–320 (KDVKWSSVAV…HLVKGESWPE (309 aa)). Phosphotyrosine is present on residues tyrosine 105 and tyrosine 453. The tract at residues 496–572 (IPGTLGAAVK…SPSPTLSYYS (77 aa)) is disordered. The necessary for interaction with GRB2 stretch occupies residues 498–550 (GTLGAAVKSSDTALPPPPVPPKSEAVREECRLLNAPPVPPRSAKPLSTSPSIP). Positions 558–572 (RQQTRSPSPTLSYYS) are enriched in polar residues. Phosphoserine is present on residues serine 610 and serine 614. Disordered regions lie at residues 626–664 (WPNH…PKRN) and 738–763 (ASET…PDLS). 2 stretches are compositionally biased toward polar residues: residues 631–640 (SGASESQTRS) and 648–658 (RSYSYPRQKTP). The region spanning 811–876 (LSIEEVSKSL…QFINGWRPKI (66 aa)) is the SAM domain.

It belongs to the GAREM family. In terms of assembly, isoform 1 interacts with EGFR. Isoform 1 interacts (via proline-rich domain and phosphorylated at Tyr-105 and Tyr-453) with GRB2 (via SH3 domains); the interaction occurs upon EGF stimulation. Isoform 1 interacts (phosphorylated at Tyr-453) with PTPN11; the interaction increases MAPK/ERK activity and does not affect the GRB2/SOS complex formation. Isoform 2 does not interact with GRB2. On EGF stimulation, phosphorylated on Tyr-105 and Tyr-453. In terms of tissue distribution, isoform 1 is ubiquitously expressed.

Functionally, acts as an adapter protein that plays a role in intracellular signaling cascades triggered either by the cell surface activated epidermal growth factor receptor and/or cytoplasmic protein tyrosine kinases. Promotes activation of the MAPK/ERK signaling pathway. Plays a role in the regulation of cell proliferation. This Homo sapiens (Human) protein is GRB2-associated and regulator of MAPK protein 1 (GAREM1).